The sequence spans 453 residues: MKSLKSSTHDVPHPEHVVWAPPAYDEQHHLFFSHGTVLIGIVGSLIITVAVVGNVLVCLAIFTEPILSHSKSNFFIVSLAVADLLLALLVMTFALVNDMYGYWLFGETFCFIWMSADVMCETASIFSICVISYDRLKQVQKPLHYEEFMTTTRALLIIACLWICSFVLSFVPIFLEWHELSVEEIKAIFKDNKTEKEKALEAHNFSSALNQTLGDNQKSNAKHVCLFDVHFTYSVIYSFICFYVPCTLMLTNYLRLFLIAQTHQVRIRSLQMTNPPQLRGQGASSYRNQGTQGSKAARTLTIITGTFLACWLPFFIINPIAAADEHLIPLECFMVTIWLGYFNSSVNPIIYGTSNSKFRAAFKRLLRCRSVKSVVGSISPVSPAYRAFSWIRPSRLDLSSSEHPSDACDTGRGKNSKGGDCATADPTKPDVSVSEEIIYAGTKVFDSDTAFSS.

Residues M1–T36 lie on the Extracellular side of the membrane. A helical transmembrane segment spans residues V37–V57. Residues C58–F74 are Cytoplasmic-facing. Residues F75–A94 traverse the membrane as a helical segment. Residues L95–C110 are Extracellular-facing. C110 and C225 are joined by a disulfide. A helical transmembrane segment spans residues F111–Y133. The Cytoplasmic segment spans residues D134 to R153. Residues A154 to L175 traverse the membrane as a helical segment. Residues E176–H223 are Extracellular-facing. A helical membrane pass occupies residues V224 to V244. Residues P245–T301 lie on the Cytoplasmic side of the membrane. A helical membrane pass occupies residues I302–A322. The Extracellular portion of the chain corresponds to A323–E331. Residues C332–G352 traverse the membrane as a helical segment. At T353–S453 the chain is on the cytoplasmic side. The segment at D397–K428 is disordered. Positions H403–R412 are enriched in basic and acidic residues.

It belongs to the G-protein coupled receptor 1 family. In terms of tissue distribution, reproductive system.

Its subcellular location is the cell membrane. This is one of the several different receptors for 5-hydroxytryptamine (serotonin). 5-HT plays important roles in various behavioral and physiological processes in aplysia. These include feeding, locomotion, circadian rhythm, learning and memory, synaptic plasticity, and synaptic growth. This receptor is mediated by G proteins that stimulate phospholipase C. The sequence is that of 5-hydroxytryptamine receptor 1 (5HTB1) from Aplysia californica (California sea hare).